We begin with the raw amino-acid sequence, 293 residues long: MVEHYSVLHREVLEFTKDLKEGYFIDATVGGGGHSYLILKQNPKLKIIGVDKDDYALEVAKERLKDFEGRFSLVKSSFKDIDKIVKDLDVNPVVGILFDFGVSHFQLKLPRGFSFQREEPLDMRMDTSSELTAYYVVNYYPESRLFNIISKYGEEKFAKRIAKNIVEYRKKKKIETTKELADIVYRSYPPNLRHSRIHPATKTFQAIRIEVNNELLEIEEALEKAIHIVSKEGIIITISFHSLEDRIVKNTFKKYKELKFLDILTKKPITPKEDEIRENPASRSAKMRVARRL.

Residues 32–34 (GGH), Asp51, Phe78, Asp99, and Gln106 contribute to the S-adenosyl-L-methionine site. The disordered stretch occupies residues 274–293 (DEIRENPASRSAKMRVARRL).

It belongs to the methyltransferase superfamily. RsmH family.

It is found in the cytoplasm. The enzyme catalyses cytidine(1402) in 16S rRNA + S-adenosyl-L-methionine = N(4)-methylcytidine(1402) in 16S rRNA + S-adenosyl-L-homocysteine + H(+). Functionally, specifically methylates the N4 position of cytidine in position 1402 (C1402) of 16S rRNA. This is Ribosomal RNA small subunit methyltransferase H from Sulfurihydrogenibium azorense (strain DSM 15241 / OCM 825 / Az-Fu1).